We begin with the raw amino-acid sequence, 467 residues long: UDP-N-acetylmuramoylalanine--D-glutamate ligase (467 aa).

Position 121–127 (121–127 (GTNGKST)) interacts with ATP.

It belongs to the MurCDEF family.

The protein resides in the cytoplasm. It carries out the reaction UDP-N-acetyl-alpha-D-muramoyl-L-alanine + D-glutamate + ATP = UDP-N-acetyl-alpha-D-muramoyl-L-alanyl-D-glutamate + ADP + phosphate + H(+). It functions in the pathway cell wall biogenesis; peptidoglycan biosynthesis. In terms of biological role, cell wall formation. Catalyzes the addition of glutamate to the nucleotide precursor UDP-N-acetylmuramoyl-L-alanine (UMA). The chain is UDP-N-acetylmuramoylalanine--D-glutamate ligase from Chelativorans sp. (strain BNC1).